The chain runs to 425 residues: Adenylosuccinate synthetase (425 aa).

Residues 12–18 (GDEGKGK) and 40–42 (GHT) each bind GTP. Asp-13 acts as the Proton acceptor in catalysis. The Mg(2+) site is built by Asp-13 and Gly-40. Residues 13 to 16 (DEGK), 38 to 41 (NAGH), Thr-129, Arg-143, Asn-221, Thr-236, and Arg-300 contribute to the IMP site. The active-site Proton donor is His-41. 296–302 (VTTGRKR) provides a ligand contact to substrate. Residues Arg-302, 328-330 (KLD), and 410-412 (GVG) contribute to the GTP site.

This sequence belongs to the adenylosuccinate synthetase family. Homodimer. It depends on Mg(2+) as a cofactor.

It is found in the cytoplasm. The enzyme catalyses IMP + L-aspartate + GTP = N(6)-(1,2-dicarboxyethyl)-AMP + GDP + phosphate + 2 H(+). Its pathway is purine metabolism; AMP biosynthesis via de novo pathway; AMP from IMP: step 1/2. In terms of biological role, plays an important role in the de novo pathway and in the salvage pathway of purine nucleotide biosynthesis. Catalyzes the first committed step in the biosynthesis of AMP from IMP. The sequence is that of Adenylosuccinate synthetase from Phaeosphaeria nodorum (strain SN15 / ATCC MYA-4574 / FGSC 10173) (Glume blotch fungus).